The primary structure comprises 100 residues: Flagellar transcriptional regulator FlhD (100 aa).

It belongs to the FlhD family. As to quaternary structure, homodimer; disulfide-linked. Forms a heterohexamer composed of two FlhC and four FlhD subunits. Each FlhC binds a FlhD dimer, forming a heterotrimer, and a hexamer assembles by dimerization of two heterotrimers.

The protein localises to the cytoplasm. Functions in complex with FlhC as a master transcriptional regulator that regulates transcription of several flagellar and non-flagellar operons by binding to their promoter region. Activates expression of class 2 flagellar genes, including fliA, which is a flagellum-specific sigma factor that turns on the class 3 genes. Also regulates genes whose products function in a variety of physiological pathways. The protein is Flagellar transcriptional regulator FlhD of Ralstonia pickettii (strain 12D).